Consider the following 352-residue polypeptide: Putative hetero-Diels-Alderase (352 aa).

The signal sequence occupies residues Met1–Thr20. 6 N-linked (GlcNAc...) asparagine glycosylation sites follow: Asn26, Asn41, Asn47, Asn135, Asn211, and Asn310.

It belongs to the eupF Diels-Alderase family.

Its pathway is secondary metabolite biosynthesis; terpenoid biosynthesis. In terms of biological role, putative hetero-Diels-Alderase; part of the gene cluster that mediates the biosynthesis of eupenifeldin, a bistropolone meroterpenoid that acts as an antitumor agent. The first step of eupenifeldin biosynthesis is the biosynthesis of 3-methylorcinaldehyde performed by the non-reducing polyketide synthase eupA. Oxidative dearomatization of 3-methylorcinaldehyde likely catalyzed by the FAD-dependent monooxygenase eupB is followed by oxidative ring expansion by the 2-oxoglutarate-dependent dioxygenase eupC to provide the first tropolone metabolite, tropolone stipitaldehyde. In parallel, generation of sesquiterpene alpha-humulene from farnesylpyrophosphate (FPP) is catalyzed by the terpene cyclase eupE. The cytochrome P450 monooxygenase eupD then hydroxylates humulene to humulenol. The putative Diels-Alderase eupF probably catalyzes the formation of the tropolone-humulene skeleton by linking humulenol and the polyketide moiety. The short-chain dehydrogenase/reductase eupG and the flavin-dependent monooxygenase eupH are also essential for eupenifeldin biosynthesis and are likely the additional decorating enzymes of the tropolone-humulene skeleton to produce final eupenifeldin or derivatives. The polypeptide is Putative hetero-Diels-Alderase (Phoma sp).